We begin with the raw amino-acid sequence, 439 residues long: Cysteine desulfurase-like protein ustD (439 aa).

Residues 1–25 (MKSVATSSLDDVDKDSVPLGSSING) are disordered. Pyridoxal 5'-phosphate contacts are provided by residues 120–121 (TT), Asn206, and 255–257 (SWY). Lys258 bears the N6-(pyridoxal phosphate)lysine mark.

It belongs to the class-V pyridoxal-phosphate-dependent aminotransferase family. Pyridoxal 5'-phosphate serves as cofactor.

The protein operates within mycotoxin biosynthesis. Its function is as follows. Cysteine desulfurase-like protein; part of the gene cluster that mediates the biosynthesis of the secondary metabolite ustiloxin B, an antimitotic tetrapeptide. First, ustA is processed by the subtilisin-like endoprotease Kex2 that is outside the ustiloxin B gene cluster, at the C-terminal side of Arg-Lys, after transfer to Golgi apparatus through the endoplasmic reticulum (ER). Cleavage by KEX2 generates 16 peptides YAIG-I to YAIG-XVI. To process the precursor peptide further, at least two peptidases are necessary to cleave the N-terminal and C-terminal sides of the Tyr-Ala-Ile-Gly core peptide which serves as backbone for the synthesis of ustiloxin B, through cyclization and modification of the tyrosine with a non-protein coding amino acid, norvaline. One of the two peptidases must be the serine peptidase ustP; and the other pepdidase is probably ustH. Macrocyclization of the core peptide derived from ustA requires the tyrosinase ustQ, as well as the homologous oxidases ustYa and ustYb, and leads to the production of the first cyclization product N-desmethylustiloxin F. For the formation of N-desmethylustiloxin F, three oxidation steps are required, hydroxylation at the benzylic position, hydroxylation at either the aromatic ring of Tyr or beta-position of Ile, and oxidative cyclization. UstQ may catalyze the oxidation of a phenol moiety, whereas the ustYa and ustYb are most likely responsible for the remaining two-step oxidations. N-desmethylustiloxin F is then methylated by ustM to yield ustiloxin F which in turn substrate of the cytochrome P450 monooxygenase ustC which catalyzes the formation of S-deoxyustiloxin H. The flavoprotein monooxygenases ustF1 and ustF2 then participate in the modification of the side chain of S-deoxyustiloxin H, leading to the synthesis of an oxime intermediate, via ustiloxin H. Finally, carboxylative dehydration performed by the cysteine desulfurase-like protein ustD yields ustiloxin B. The chain is Cysteine desulfurase-like protein ustD from Aspergillus flavus (strain ATCC 200026 / FGSC A1120 / IAM 13836 / NRRL 3357 / JCM 12722 / SRRC 167).